Here is a 925-residue protein sequence, read N- to C-terminus: Coronin-7 (925 aa).

WD repeat units follow at residues 75–115 (CHSD…QALP), 124–163 (PEDL…PLTE), 166–205 (AHGD…RASQ), and 209–253 (AHEN…SALA). The segment at 419 to 461 (VGDADASEGFSSPPSSLTSPSTPSSLGPSLSSTSGIGTSPSLR) is disordered. The span at 429–460 (SSPPSSLTSPSTPSSLGPSLSSTSGIGTSPSL) shows a compositional bias: low complexity. Phosphoserine occurs at positions 462 and 465. A Glycyl lysine isopeptide (Lys-Gly) (interchain with G-Cter in ubiquitin) cross-link involves residue K472. 3 WD repeats span residues 542–582 (QNGA…LEEV), 592–632 (GHTE…DRLK), and 635–674 (GHQD…EPLQ). A Glycyl lysine isopeptide (Lys-Gly) (interchain with G-Cter in ubiquitin) cross-link involves residue K680. The stretch at 728 to 768 (DVAPSTLLPSYDPDTGLVLLTGKGDTRVFLYELLPESPFFL) is one WD 8 repeat. Positions 858 to 925 (QPPDMSPVSQ…FEGVDEDEWD (68 aa)) are disordered. Over residues 866-882 (SQAPREAPARRAPSSAQ) the composition is skewed to low complexity. Over residues 884 to 896 (LEEKSDQQKKEEL) the composition is skewed to basic and acidic residues. At S915 the chain carries Phosphoserine.

Belongs to the WD repeat coronin family. Interacts with clathrin adapter AP1 complex. This interaction takes place at Golgi membranes and not AP1-positive endosomal membranes. Interacts (when ubiquitinated at Lys-472) with EPS15. In terms of processing, the membrane-associated form is phosphorylated on tyrosine residues. Post-translationally, ubiquitinated via 'Lys-33'-linked ubiquitin chains by the BCR(KLHL20) E3 ubiquitin ligase complex: 'Lys-33'-linked ubiquitination promotes interaction with EPS15 and facilitates actin polymerization at the trans-Golgi network, thereby facilitating post-Golgi trafficking. Deubiquitinated by ZRANB1/TRABID. In terms of tissue distribution, widely expressed. Expressed in the spleen, peripheral leukocytes, testes, brain, thymus and small intestine.

The protein localises to the golgi apparatus membrane. It localises to the golgi apparatus. The protein resides in the trans-Golgi network. Its subcellular location is the cytoplasmic vesicle. It is found in the cytoplasm. The protein localises to the cytosol. In terms of biological role, F-actin regulator involved in anterograde Golgi to endosome transport: upon ubiquitination via 'Lys-33'-linked ubiquitin chains by the BCR(KLHL20) E3 ubiquitin ligase complex, interacts with EPS15 and localizes to the trans-Golgi network, where it promotes actin polymerization, thereby facilitating post-Golgi trafficking. May play a role in the maintenance of the Golgi apparatus morphology. The sequence is that of Coronin-7 (CORO7) from Homo sapiens (Human).